The following is a 146-amino-acid chain: 3-hydroxyacyl-[acyl-carrier-protein] dehydratase FabZ (146 aa).

Residue H49 is part of the active site.

This sequence belongs to the thioester dehydratase family. FabZ subfamily.

Its subcellular location is the cytoplasm. It carries out the reaction a (3R)-hydroxyacyl-[ACP] = a (2E)-enoyl-[ACP] + H2O. Its function is as follows. Involved in unsaturated fatty acids biosynthesis. Catalyzes the dehydration of short chain beta-hydroxyacyl-ACPs and long chain saturated and unsaturated beta-hydroxyacyl-ACPs. The sequence is that of 3-hydroxyacyl-[acyl-carrier-protein] dehydratase FabZ from Psychrobacter arcticus (strain DSM 17307 / VKM B-2377 / 273-4).